The chain runs to 159 residues: Phosphopantetheine adenylyltransferase (159 aa).

Residue Thr10 participates in substrate binding. Residues 10–11 and His18 contribute to the ATP site; that span reads TF. Substrate contacts are provided by Lys42, Met74, and Arg88. ATP contacts are provided by residues 89 to 91, Glu99, and 124 to 130; these read GLR and WSFISSS.

This sequence belongs to the bacterial CoaD family. In terms of assembly, homohexamer. The cofactor is Mg(2+).

It is found in the cytoplasm. The enzyme catalyses (R)-4'-phosphopantetheine + ATP + H(+) = 3'-dephospho-CoA + diphosphate. It participates in cofactor biosynthesis; coenzyme A biosynthesis; CoA from (R)-pantothenate: step 4/5. Reversibly transfers an adenylyl group from ATP to 4'-phosphopantetheine, yielding dephospho-CoA (dPCoA) and pyrophosphate. This Citrobacter koseri (strain ATCC BAA-895 / CDC 4225-83 / SGSC4696) protein is Phosphopantetheine adenylyltransferase.